We begin with the raw amino-acid sequence, 217 residues long: tRNA (guanine-N(7)-)-methyltransferase (217 aa).

Residues E46, E71, D98, and D120 each contribute to the S-adenosyl-L-methionine site. The active site involves D120. K124 contributes to the substrate binding site. The interaction with RNA stretch occupies residues 126-131 (RHEKRR). Residues D156 and 196 to 199 (TEYE) contribute to the substrate site.

This sequence belongs to the class I-like SAM-binding methyltransferase superfamily. TrmB family.

It catalyses the reaction guanosine(46) in tRNA + S-adenosyl-L-methionine = N(7)-methylguanosine(46) in tRNA + S-adenosyl-L-homocysteine. Its pathway is tRNA modification; N(7)-methylguanine-tRNA biosynthesis. In terms of biological role, catalyzes the formation of N(7)-methylguanine at position 46 (m7G46) in tRNA. This is tRNA (guanine-N(7)-)-methyltransferase from Lactobacillus gasseri (strain ATCC 33323 / DSM 20243 / BCRC 14619 / CIP 102991 / JCM 1131 / KCTC 3163 / NCIMB 11718 / NCTC 13722 / AM63).